The sequence spans 463 residues: Probable Xaa-Pro aminopeptidase pepP (463 aa).

Mn(2+) is bound by residues aspartate 259, aspartate 270, glutamate 393, and glutamate 433.

It belongs to the peptidase M24B family. The cofactor is Mn(2+).

It catalyses the reaction Release of any N-terminal amino acid, including proline, that is linked to proline, even from a dipeptide or tripeptide.. Its function is as follows. Catalyzes the removal of a penultimate prolyl residue from the N-termini of peptides. The chain is Probable Xaa-Pro aminopeptidase pepP (pepP) from Pyrenophora tritici-repentis (strain Pt-1C-BFP) (Wheat tan spot fungus).